The sequence spans 475 residues: Ribulose bisphosphate carboxylase large chain (475 aa).

Positions 1-2 are excised as a propeptide; that stretch reads MS. Position 3 is an N-acetylproline (Pro3). Lys14 is subject to N6,N6,N6-trimethyllysine. Residues Asn123 and Thr173 each contribute to the substrate site. Residue Lys175 is the Proton acceptor of the active site. Substrate is bound at residue Lys177. Positions 201, 203, and 204 each coordinate Mg(2+). Lys201 is modified (N6-carboxylysine). The active-site Proton acceptor is the His294. Substrate is bound by residues Arg295, His327, and Ser379.

This sequence belongs to the RuBisCO large chain family. Type I subfamily. As to quaternary structure, heterohexadecamer of 8 large chains and 8 small chains; disulfide-linked. The disulfide link is formed within the large subunit homodimers. Requires Mg(2+) as cofactor. The disulfide bond which can form in the large chain dimeric partners within the hexadecamer appears to be associated with oxidative stress and protein turnover.

It localises to the plastid. The protein resides in the chloroplast. The catalysed reaction is 2 (2R)-3-phosphoglycerate + 2 H(+) = D-ribulose 1,5-bisphosphate + CO2 + H2O. It carries out the reaction D-ribulose 1,5-bisphosphate + O2 = 2-phosphoglycolate + (2R)-3-phosphoglycerate + 2 H(+). In terms of biological role, ruBisCO catalyzes two reactions: the carboxylation of D-ribulose 1,5-bisphosphate, the primary event in carbon dioxide fixation, as well as the oxidative fragmentation of the pentose substrate in the photorespiration process. Both reactions occur simultaneously and in competition at the same active site. The polypeptide is Ribulose bisphosphate carboxylase large chain (Spirogyra maxima (Green alga)).